The sequence spans 156 residues: Small ribosomal subunit protein uS7 (156 aa).

It belongs to the universal ribosomal protein uS7 family. As to quaternary structure, part of the 30S ribosomal subunit. Contacts proteins S9 and S11.

Functionally, one of the primary rRNA binding proteins, it binds directly to 16S rRNA where it nucleates assembly of the head domain of the 30S subunit. Is located at the subunit interface close to the decoding center, probably blocks exit of the E-site tRNA. The polypeptide is Small ribosomal subunit protein uS7 (Citrobacter koseri (strain ATCC BAA-895 / CDC 4225-83 / SGSC4696)).